We begin with the raw amino-acid sequence, 612 residues long: Phosphoenolpyruvate carboxykinase [GTP] (612 aa).

Substrate contacts are provided by residues arginine 82 and 221–223 (YGG). 2 residues coordinate Mn(2+): lysine 230 and histidine 250. Position 272 (serine 272) interacts with substrate. 273 to 278 (ACGKTN) is a binding site for GTP. Cysteine 274 is an active-site residue. Aspartate 297 provides a ligand contact to Mn(2+). 388 to 390 (NSR) serves as a coordination point for substrate. GTP-binding positions include arginine 390, arginine 421, and 516 to 519 (FGEN).

It belongs to the phosphoenolpyruvate carboxykinase [GTP] family. Monomer. The cofactor is Mn(2+).

The protein localises to the cytoplasm. The enzyme catalyses oxaloacetate + GTP = phosphoenolpyruvate + GDP + CO2. The protein operates within carbohydrate biosynthesis; gluconeogenesis. Its function is as follows. Catalyzes the conversion of oxaloacetate (OAA) to phosphoenolpyruvate (PEP), the rate-limiting step in the metabolic pathway that produces glucose from lactate and other precursors derived from the citric acid cycle. This is Phosphoenolpyruvate carboxykinase [GTP] from Corynebacterium efficiens (strain DSM 44549 / YS-314 / AJ 12310 / JCM 11189 / NBRC 100395).